The sequence spans 572 residues: Sulfite reductase [NADPH] hemoprotein beta-component (572 aa).

Residues Cys437, Cys443, Cys482, and Cys486 each contribute to the [4Fe-4S] cluster site. Position 486 (Cys486) interacts with siroheme.

The protein belongs to the nitrite and sulfite reductase 4Fe-4S domain family. In terms of assembly, alpha(8)-beta(8). The alpha component is a flavoprotein, the beta component is a hemoprotein. Siroheme serves as cofactor. It depends on [4Fe-4S] cluster as a cofactor.

It catalyses the reaction hydrogen sulfide + 3 NADP(+) + 3 H2O = sulfite + 3 NADPH + 4 H(+). It participates in sulfur metabolism; hydrogen sulfide biosynthesis; hydrogen sulfide from sulfite (NADPH route): step 1/1. In terms of biological role, component of the sulfite reductase complex that catalyzes the 6-electron reduction of sulfite to sulfide. This is one of several activities required for the biosynthesis of L-cysteine from sulfate. The polypeptide is Sulfite reductase [NADPH] hemoprotein beta-component (Staphylococcus epidermidis (strain ATCC 35984 / DSM 28319 / BCRC 17069 / CCUG 31568 / BM 3577 / RP62A)).